The chain runs to 118 residues: Protein MGF 110-6L (118 aa).

Positions 1 to 18 are cleaved as a signal peptide; it reads MLVIFLGILGLLASQVSS. Residue Asn96 is glycosylated (N-linked (GlcNAc...) asparagine; by host). The Prevents secretion from ER motif lies at 115 to 118; that stretch reads KDEL.

It belongs to the asfivirus MGF 110 family. In terms of processing, N-glycosylated.

The protein resides in the host endoplasmic reticulum lumen. Plays a role in virus cell tropism, and may be required for efficient virus replication in macrophages. The sequence is that of Protein MGF 110-6L from African swine fever virus (strain Badajoz 1971 Vero-adapted) (Ba71V).